The following is a 496-amino-acid chain: MEKSQGYLELDKSWRHDFLYPLIFQEYIYALAHEQGLNRSILLENTDHDNKYSSLIVKRLITRMQQQNHFLIFDNDSNQNPFWKHNNNLYSQMISEGFVIIVEIPFSPRFVDSLEEKKKILKFNNLRSIHSIFPFLEDQILHLNFVSNILIPYPIHLEIVVQSLRYRVKDASSLHLLRFFLFTLNKSISSFSKRNPRLFLFLYNSHVYEYESTFLFLRNKTSHLRSTSSGAFLERIFFYGKIKHLIEVFANDFQAILWLFKDPFMHYVRYQGKSILASKRTSLRMNKWKYYLINFWQCQFYVWSQPGRVSINQLSNHSLDFLGYLSSVRLNPLAVRSQMLENSFLTDNAIKKFDIIVLLIPLIGSLAKAKFCNVLGHPLSKPARADSSDSDIIERFVRICRNLSHYHSGSSKKKSLYRIKYILRLSCARTLARKHKTAVRSFLKRLGSELLEEFLTEDGQVISLIFPRTSSTSWRLYRGGIWYLDITCINDLANHE.

The protein belongs to the intron maturase 2 family. MatK subfamily.

The protein resides in the plastid. The protein localises to the chloroplast. In terms of biological role, usually encoded in the trnK tRNA gene intron. Probably assists in splicing its own and other chloroplast group II introns. In Paeonia suffruticosa (Tree peony), this protein is Maturase K.